The sequence spans 178 residues: ATP-dependent protease subunit HslV (178 aa).

The active site involves T5. Positions 161, 164, and 167 each coordinate Na(+).

This sequence belongs to the peptidase T1B family. HslV subfamily. In terms of assembly, a double ring-shaped homohexamer of HslV is capped on each side by a ring-shaped HslU homohexamer. The assembly of the HslU/HslV complex is dependent on binding of ATP.

It localises to the cytoplasm. The enzyme catalyses ATP-dependent cleavage of peptide bonds with broad specificity.. With respect to regulation, allosterically activated by HslU binding. In terms of biological role, protease subunit of a proteasome-like degradation complex believed to be a general protein degrading machinery. This Nitratiruptor sp. (strain SB155-2) protein is ATP-dependent protease subunit HslV.